Here is a 490-residue protein sequence, read N- to C-terminus: Scarecrow-like transcription factor PAT1 (490 aa).

The GRAS domain maps to 110 to 490 (TLEAISRRDL…RDLVASCAWK (381 aa)). A leucine repeat I (LRI) region spans residues 117-178 (RDLRADLVSC…AQLASSGSSI (62 aa)). The VHIID stretch occupies residues 197-262 (MHILYEVCPY…GGPPRIRITG (66 aa)). A VHIID motif is present at residues 228-232 (VHIID). The leucine repeat II (LRII) stretch occupies residues 278–310 (IVGNRLAKLAKQFNVPFEFNSVSVSVSEVKPKN). The tract at residues 319–413 (LAVNFAFVLH…QHCLARDVVN (95 aa)) is PFYRE. Residues 416–490 (ACEGADRVER…RDLVASCAWK (75 aa)) are SAW.

Belongs to the GRAS family.

The protein resides in the cytoplasm. Functionally, probable transcription factor involved in phytochrome A (phyA) signal transduction. The polypeptide is Scarecrow-like transcription factor PAT1 (PAT1) (Arabidopsis thaliana (Mouse-ear cress)).